Consider the following 513-residue polypeptide: Bone morphogenetic protein 6 (513 aa).

An N-terminal signal peptide occupies residues 1 to 20 (MPGLGRRAQWLCWWWGLLCS). Positions 21–374 (CCGPPPLRPP…VSEVHVRTTR (354 aa)) are excised as a propeptide. Disordered regions lie at residues 38–66 (AAGG…SSGF), 89–131 (LPHR…RLKS), and 145–200 (ADND…ASPL). Positions 98-121 (GLQQPQPPALRQQEEQQQQQQLPR) are enriched in low complexity. Positions 158–172 (QQSWPHEAASSSQRR) are enriched in polar residues. Residues Asn-241, Asn-269, Asn-386, Asn-404, and Asn-454 are each glycosylated (N-linked (GlcNAc...) asparagine). Residues 373–398 (TRSASSRRRQQSRNRSTQSQDVARVS) are disordered. 3 disulfides stabilise this stretch: Cys-412–Cys-478, Cys-441–Cys-510, and Cys-445–Cys-512.

The protein belongs to the TGF-beta family. As to quaternary structure, interacts with SOSTDC1. Interacts (when glycosylated) with type I receptor ACVR1; the interaction may induce HAMP expression. Interacts with type II receptor ACVR2B. Interacts with Hemojuvelin/HJV. Interacts with ERFE; the interaction inhibits BMP-induced transcription of HAMP. Interacts with BMPR1A/ALK3. Forms heterodimers with BMP2 in vitro; the heterodimer then binds to its receptor BMPR1A /ALK3 and may induce HAMP expression. Post-translationally, glycosylated at Asn-454. Glycosylation is crucial for recognition by the activin receptor type I/ACVR1.

The protein localises to the secreted. Its function is as follows. Growth factor of the TGF-beta superfamily that plays essential roles in many developmental processes including cartilage and bone formation. Also plays an important role in the regulation of HAMP/hepcidin expression and iron metabolism by acting as a ligand for hemojuvelin/HJV. Also acts to promote expression of HAMP, potentially via the interaction with its receptor BMPR1A/ALK3. Initiates the canonical BMP signaling cascade by associating with type I receptor ACVR1 and type II receptor ACVR2B. In turn, ACVR1 propagates signal by phosphorylating SMAD1/5/8 that travel to the nucleus and act as activators and repressors of transcription of target. Can also signal through non-canonical pathway such as TAZ-Hippo signaling cascade to modulate VEGF signaling by regulating VEGFR2 expression. The protein is Bone morphogenetic protein 6 (BMP6) of Homo sapiens (Human).